Consider the following 233-residue polypeptide: Lipoprotein-releasing system ATP-binding protein LolD (233 aa).

In terms of domain architecture, ABC transporter spans 6 to 233; the sequence is LQCDNLCKRY…TAELSLMGAE (228 aa). 42-49 serves as a coordination point for ATP; it reads GSSGSGKS.

This sequence belongs to the ABC transporter superfamily. Lipoprotein translocase (TC 3.A.1.125) family. In terms of assembly, the complex is composed of two ATP-binding proteins (LolD) and two transmembrane proteins (LolC and LolE).

It is found in the cell inner membrane. Part of the ABC transporter complex LolCDE involved in the translocation of mature outer membrane-directed lipoproteins, from the inner membrane to the periplasmic chaperone, LolA. Responsible for the formation of the LolA-lipoprotein complex in an ATP-dependent manner. Such a release is dependent of the sorting-signal (absence of an Asp at position 2 of the mature lipoprotein) and of LolA. The protein is Lipoprotein-releasing system ATP-binding protein LolD of Escherichia coli (strain K12).